The primary structure comprises 481 residues: Aspartyl/glutamyl-tRNA(Asn/Gln) amidotransferase subunit B (481 aa).

The disordered stretch occupies residues 29 to 50; that stretch reads SSSKSSHTDPKNTNISPIDLGH.

It belongs to the GatB/GatE family. GatB subfamily. As to quaternary structure, heterotrimer of A, B and C subunits.

It catalyses the reaction L-glutamyl-tRNA(Gln) + L-glutamine + ATP + H2O = L-glutaminyl-tRNA(Gln) + L-glutamate + ADP + phosphate + H(+). The enzyme catalyses L-aspartyl-tRNA(Asn) + L-glutamine + ATP + H2O = L-asparaginyl-tRNA(Asn) + L-glutamate + ADP + phosphate + 2 H(+). Functionally, allows the formation of correctly charged Asn-tRNA(Asn) or Gln-tRNA(Gln) through the transamidation of misacylated Asp-tRNA(Asn) or Glu-tRNA(Gln) in organisms which lack either or both of asparaginyl-tRNA or glutaminyl-tRNA synthetases. The reaction takes place in the presence of glutamine and ATP through an activated phospho-Asp-tRNA(Asn) or phospho-Glu-tRNA(Gln). The chain is Aspartyl/glutamyl-tRNA(Asn/Gln) amidotransferase subunit B from Malacoplasma penetrans (strain HF-2) (Mycoplasma penetrans).